Consider the following 480-residue polypeptide: Trigger factor (480 aa).

The 96-residue stretch at 169-264 (GDIAVVDFKG…LKELKEKELP (96 aa)) folds into the PPIase FKBP-type domain. Positions 441-480 (PEGSLSPAEETEAAESDADADVSQTEQENSEPSTTEVTEG) are disordered. The span at 449-460 (EETEAAESDADA) shows a compositional bias: acidic residues. Residues 462 to 480 (VSQTEQENSEPSTTEVTEG) show a composition bias toward polar residues.

This sequence belongs to the FKBP-type PPIase family. Tig subfamily.

The protein localises to the cytoplasm. The enzyme catalyses [protein]-peptidylproline (omega=180) = [protein]-peptidylproline (omega=0). In terms of biological role, involved in protein export. Acts as a chaperone by maintaining the newly synthesized protein in an open conformation. Functions as a peptidyl-prolyl cis-trans isomerase. This is Trigger factor from Nostoc punctiforme (strain ATCC 29133 / PCC 73102).